The primary structure comprises 732 residues: Prolyl 3-hydroxylase 3 (732 aa).

The signal sequence occupies residues 1–19; the sequence is MLRLLRLLLLLLLPPPGSP. The span at 15-25 shows a compositional bias: pro residues; it reads PPGSPEPPEPP. The disordered stretch occupies residues 15-35; sequence PPGSPEPPEPPGLAQLSPGSP. TPR repeat units follow at residues 39–72, 152–185, 214–247, and 312–345; these read PDLLYADGLRAYSAGAWAPAVALLREALRSRAAL, REPYNYLQRAYYQLKKLDLAASAAHTFFVANPTH, YWAAYDTGLELLEQREAALALPQLEEALQGSLAH, and LSQLRRLHEAYAQVGNMSQAMENVLSVLLFYPED. N-linked (GlcNAc...) asparagine glycosylation is found at Asn-327 and Asn-458. The Fe2OG dioxygenase domain occupies 557–671; that stretch reads THLVCRSAIE…RCALALWHTW (115 aa). Positions 580, 582, and 652 each coordinate Fe cation. The active site involves Arg-662. Positions 674-703 form a coiled coil; the sequence is EHSEQEWTEAKELLQEEEEEEEEEDILSRD. Basic and acidic residues predominate over residues 676–687; that stretch reads SEQEWTEAKELL. Positions 676–732 are disordered; sequence SEQEWTEAKELLQEEEEEEEEEDILSRDPSPEPPSHKLQRVQEKAGKPRRVRVREEL. The span at 688–698 shows a compositional bias: acidic residues; it reads QEEEEEEEEED. Over residues 722–732 the composition is skewed to basic residues; it reads KPRRVRVREEL. A Prevents secretion from ER motif is present at residues 729 to 732; the sequence is REEL.

The protein belongs to the leprecan family. In terms of assembly, identified in a complex with PLOD1 and P3H4. Fe cation serves as cofactor. It depends on L-ascorbate as a cofactor. As to expression, detected in kidney (at protein level).

It is found in the endoplasmic reticulum. The catalysed reaction is L-prolyl-[collagen] + 2-oxoglutarate + O2 = trans-3-hydroxy-L-prolyl-[collagen] + succinate + CO2. Part of a complex composed of PLOD1, P3H3 and P3H4 that catalyzes hydroxylation of lysine residues in collagen alpha chains and is required for normal assembly and cross-linkling of collagen fibrils. Required for normal hydroxylation of lysine residues in type I collagen chains in skin, bone, tendon, aorta and cornea. Required for normal skin stability via its role in hydroxylation of lysine residues in collagen alpha chains and in collagen fibril assembly. Apparently not required for normal prolyl 3-hydroxylation on collagen chains, possibly because it functions redundantly with other prolyl 3-hydroxylases. The sequence is that of Prolyl 3-hydroxylase 3 from Mus musculus (Mouse).